The chain runs to 454 residues: Cobyrinate a,c-diamide synthase (454 aa).

The 197-residue stretch at 244–440 (RLGIAKDKAF…LHVHFYQNPK (197 aa)) folds into the GATase cobBQ-type domain. Cysteine 326 functions as the Nucleophile in the catalytic mechanism.

It belongs to the CobB/CbiA family. It depends on Mg(2+) as a cofactor.

The enzyme catalyses cob(II)yrinate + 2 L-glutamine + 2 ATP + 2 H2O = cob(II)yrinate a,c diamide + 2 L-glutamate + 2 ADP + 2 phosphate + 2 H(+). The protein operates within cofactor biosynthesis; adenosylcobalamin biosynthesis; cob(II)yrinate a,c-diamide from sirohydrochlorin (anaerobic route): step 10/10. Functionally, catalyzes the ATP-dependent amidation of the two carboxylate groups at positions a and c of cobyrinate, using either L-glutamine or ammonia as the nitrogen source. This chain is Cobyrinate a,c-diamide synthase, found in Limosilactobacillus reuteri subsp. reuteri (strain JCM 1112) (Lactobacillus reuteri).